A 716-amino-acid polypeptide reads, in one-letter code: Polyribonucleotide nucleotidyltransferase (716 aa).

Mg(2+) is bound by residues Asp-485 and Asp-491. The KH domain maps to 552-611; sequence PRFTTIKIDQDKIKDVIGKGGAVIRELTESTNTNIEIGDDGTIKVAASDQADADAAIEKI. One can recognise an S1 motif domain in the interval 621 to 689; that stretch reads GKIYQGKVAR…RQGRVRLSMK (69 aa). Basic and acidic residues predominate over residues 689 to 698; that stretch reads KEAAEKKEEP. The tract at residues 689–716 is disordered; it reads KEAAEKKEEPAPEAPAEPAAEEENKSEE. Acidic residues predominate over residues 707–716; sequence AAEEENKSEE.

The protein belongs to the polyribonucleotide nucleotidyltransferase family. As to quaternary structure, component of the RNA degradosome, which is a multiprotein complex involved in RNA processing and mRNA degradation. It depends on Mg(2+) as a cofactor.

It localises to the cytoplasm. The catalysed reaction is RNA(n+1) + phosphate = RNA(n) + a ribonucleoside 5'-diphosphate. Involved in mRNA degradation. Catalyzes the phosphorolysis of single-stranded polyribonucleotides processively in the 3'- to 5'-direction. In Idiomarina loihiensis (strain ATCC BAA-735 / DSM 15497 / L2-TR), this protein is Polyribonucleotide nucleotidyltransferase.